A 358-amino-acid polypeptide reads, in one-letter code: tRNA pseudouridine synthase D (358 aa).

Residue Asp-84 is the Nucleophile of the active site. Positions 161–312 (GTPNYFGPQR…RRSLRLMVAD (152 aa)) constitute a TRUD domain.

This sequence belongs to the pseudouridine synthase TruD family.

It catalyses the reaction uridine(13) in tRNA = pseudouridine(13) in tRNA. In terms of biological role, responsible for synthesis of pseudouridine from uracil-13 in transfer RNAs. The polypeptide is tRNA pseudouridine synthase D (Nitrosococcus oceani (strain ATCC 19707 / BCRC 17464 / JCM 30415 / NCIMB 11848 / C-107)).